Here is a 162-residue protein sequence, read N- to C-terminus: MVLKTELCRFSGQKIYPGKGIRFIRSDSQVFLFANSKCKRYFHNRLKPAKLCWTAMYRKQHKKDIHAEAAKKRRRTTKKPYSRSIVGATLEVIQKKRAEKPEVRDAAREAALREIKERIKKTKDEKKAKKAEVTKSQKSQGGKGAVQKGSKGPKLGGGGGKR.

Disordered stretches follow at residues 64–83 and 117–162; these read DIHA…PYSR and ERIK…GGKR. The span at 71-81 shows a compositional bias: basic residues; it reads KKRRRTTKKPY. The span at 117-135 shows a compositional bias: basic and acidic residues; it reads ERIKKTKDEKKAKKAEVTK.

This sequence belongs to the eukaryotic ribosomal protein eL24 family.

The protein localises to the cytoplasm. In Hordeum vulgare (Barley), this protein is Large ribosomal subunit protein eL24 (RPL24).